We begin with the raw amino-acid sequence, 714 residues long: Protein BLISTER (714 aa).

Disordered stretches follow at residues 1 to 113 (MASA…VDFS), 219 to 261 (SSYL…KRSR), 288 to 325 (VTSS…ASDY), and 519 to 576 (MVQK…SSNT). The span at 8-33 (RRQEDVEAGRRKLEQFRKRKAAEKAK) shows a compositional bias: basic and acidic residues. Composition is skewed to polar residues over residues 36–50 (SQNT…QSVI) and 58–74 (SISN…TSNE). Residues 92 to 102 (DGSKERSRQDD) are compositionally biased toward basic and acidic residues. Polar residues-rich tracts occupy residues 219 to 253 (SSYL…SAKS), 288 to 297 (VTSSGSQLSG), 313 to 322 (NGPSSLTSGA), and 519 to 561 (MVQK…SSNQ). Residues 356 to 525 (NDDFTALEQH…LQTMVQKASS (170 aa)) adopt a coiled-coil conformation. The span at 562-576 (ETDSTTLLESDSSNT) shows a compositional bias: low complexity.

In terms of assembly, interacts with CLF. Expressed in root tips, emerging lateral roots, shoot apical meristem (SAM), vasculature of cotyledons, leaves, sepals and carpels.

The protein resides in the nucleus. It is found in the cytoplasm. In terms of biological role, is required for normal leaf, flower and seed development and controls cotyledon and leaf patterning by inhibiting premature differentiation. Regulates the expression of a subset of PcG target genes. Is required for the repression of the floral specific genes PI, SEP2, and SEP3, but also for the activation of FLC. Involved in response to cold. Involved in the regulation of COR15A, COR15B, BAM3 and AMY3 transcripts, and ascorbate levels in response to prolonged chilling temperatures. The protein is Protein BLISTER of Arabidopsis thaliana (Mouse-ear cress).